We begin with the raw amino-acid sequence, 336 residues long: Fructose-1,6-bisphosphatase class 1 (336 aa).

Mg(2+) is bound by residues E92, D115, L117, and D118. Residues 118–121 (DGSS), N211, Y244, 262–264 (YLY), and K274 contribute to the substrate site. Mg(2+) is bound at residue E280.

The protein belongs to the FBPase class 1 family. Homotetramer. Mg(2+) is required as a cofactor.

It localises to the cytoplasm. It catalyses the reaction beta-D-fructose 1,6-bisphosphate + H2O = beta-D-fructose 6-phosphate + phosphate. It functions in the pathway carbohydrate biosynthesis; gluconeogenesis. This chain is Fructose-1,6-bisphosphatase class 1, found in Vibrio cholerae serotype O1 (strain ATCC 39315 / El Tor Inaba N16961).